A 1260-amino-acid chain; its full sequence is MEGQRGSNSSLSSGNGTEVATDVSSCFYVPNPSGTDFDAESSSLPPLSPAPQVALSIPAELAAAIPLIDRFQVEAFLRLMQKQIQSAGKRGFFYSKKSSGSNVRERFTFEDMLCFQKDPIPTSLLKINSDLVSRATKLFHLILKYMGVDSSDRSTPPSLDERIDLVGKLFKKTLKRVELRDELFAQISKQTRHNPDRQYLIKAWELMYLCASSMPPSKDIGGYLSEYIHNVAHDATIEPDAQVLAVNTLKALKRSIKAGPRHTTPGREEIEALLTGRKLTTIVFFLDETFEEISYDMATTVSDAVEELAGTIKLSAFSSFSLFECRKVVSSSKSSDPGNEEYIGLDDNKYIGDLLAEFKAIKDRNKGEILHCKLVFKKKLFRESDEAVTDLMFVQLSYVQLQHDYLLGNYPVGRDDAAQLCALQILVGIGFVNSPESCIDWTSLLERFLPRQIAITRAKREWELDILARYRSMENVTKDDARQQFLRILKALPYGNSVFFSVRKIDDPIGLLPGRIILGINKRGVHFFRPVPKEYLHSAELRDIMQFGSSNTAVFFKMRVAGVLHIFQFETKQGEEICVALQTHINDVMLRRYSKARSAANSLVNGDISCSSKPQNFEVYEKRLQDLSKAYEESQKKIEKLMDEQQEKNQQEVTLREELEAIHNGLELERRKLLEVTLDRDKLRSLCDEKGTTIQSLMSELRGMEARLAKSGNTKSSKETKSELAEMNNQILYKIQKELEVRNKELHVAVDNSKRLLSENKILEQNLNIEKKKKEEVEIHQKRYEQEKKVLKLRVSELENKLEVLAQDLDSAESTIESKNSDMLLLQNNLKELEELREMKEDIDRKNEQTAAILKMQGAQLAELEILYKEEQVLRKRYYNTIEDMKGKIRVYCRIRPLNEKESSEREKQMLTTVDEFTVEHPWKDDKRKQHIYDRVFDMRASQDDIFEDTKYLVQSAVDGYNVCIFAYGQTGSGKTFTIYGHESNPGLTPRATKELFNILKRDSKRFSFSLKAYMVELYQDTLVDLLLPKSARRLKLEIKKDSKGMVFVENVTTIPISTLEELRMILERGSERRHVSGTNMNEESSRSHLILSVVIESIDLQTQSAARGKLSFVDLAGSERVKKSGSAGCQLKEAQSINKSLSALGDVIGALSSGNQHIPYRNHKLTMLMSDSLGGNAKTLMFVNVSPAESNLDETYNSLLYASRVRTIVNDPSKHISSKEMVRLKKLVAYWKEQAGKKGEEEDLVDIEEDRTRKDEADS.

The MyTH4 domain occupies 115-274; sequence FQKDPIPTSL…PGREEIEALL (160 aa). Residues 279 to 593 form the FERM domain; that stretch reads LTTIVFFLDE…HINDVMLRRY (315 aa). 2 coiled-coil regions span residues 615 to 676 and 753 to 853; these read QNFE…LLEV and SKRL…TAAI. One can recognise a Kinesin motor domain in the interval 888-1209; that stretch reads KIRVYCRIRP…LLYASRVRTI (322 aa). 972-977 provides a ligand contact to ATP; that stretch reads GSGKTF. Residues 1217–1239 form a calmodulin-binding region; sequence ISSKEMVRLKKLVAYWKEQAGKK. The segment at 1221–1260 is homodimerization domain; it reads EMVRLKKLVAYWKEQAGKKGEEEDLVDIEEDRTRKDEADS. A disordered region spans residues 1236–1260; sequence AGKKGEEEDLVDIEEDRTRKDEADS. Residues 1251–1260 show a composition bias toward basic and acidic residues; it reads DRTRKDEADS.

The protein belongs to the TRAFAC class myosin-kinesin ATPase superfamily. Kinesin family. KIN-14 subfamily. As to quaternary structure, homodimer (via C-terminus). Binds microtubules via its N-terminus containing the MyTH4 domain and binds F-actin via its FERM domain. Interacts with KIPK1. Interacts with KIPK2. Interacts with AN. Interacts with AIR9. Interacts (via C-terminus) with KIC, CAM2, CAM4 and CAM6. KIC and calmodulin show competitive binding to KCBP. Binding to calmodulin inhibits microtubule binding activity. Binding to KIC inhibits microtubule binding activity and microtubule-stimulated ATPase activity. In terms of tissue distribution, widely expressed with the highest levels in flowers. Strongly expressed in the root tip. Highly detected in the branch apex of the trichome.

Its subcellular location is the cytoplasm. The protein localises to the cell cortex. The protein resides in the cytoskeleton. It is found in the spindle. It localises to the phragmoplast. Its function is as follows. Minus-end microtubule-dependent motor protein involved in the regulation of cell division and trichome morphogenesis through microtubules bundling. Possesses basal and microtubule-stimulated ATPase activities. Acts as a hub that brings together microtubules and actin filaments to modulate the cytoskeleton during trichome formation and morphogenesis. Could be involved in the negative regulation of root growth. The protein is Kinesin-like protein KIN-14E of Arabidopsis thaliana (Mouse-ear cress).